We begin with the raw amino-acid sequence, 886 residues long: MGESDRFCYVYSCDLDISVRLKIGSLEGKREQKSYKAVLEDPMLKFSGLYQETCSDLYVTCQVFAEGKPLALPVRTSYKAFSTRWNWNEWLKLPVKYADLPRSAQVALTIWDVYGPGKAIPVGGATVSLFGKYGMFRQGMHDLKVWPNIEADGSELTKTPGRTNSSASEDQMSRLAKLTKAHRQGHMVKVDWLDRLTFREIEMINESEKRSSNFMYLMVEFPCVKCDEKEYGIVYYEKDGDESTPISTSSEIVRVPDPQMSMENLVEIKHHKLARSLRSGPSDHDLKPNAATRDQLNIIVSYPPTKQLTSEEQDLVWKFRSYLTSQEKALTKFLKCVNWDLPQEAKQALELLGKWKPMDVEDSLELLSSHFTNPTVRRYAVARLQQADDEDLLMYLLQLVQALKYENFEDIKSGLEPTKKDSQGPMLESMTTSGINPETDSSQILSNPLPAVSSPAPPSKTKDGLDAETLEQDLCTFLISRACKNSTLANYLYWYVIVECEDQDTQLRDPKTHEMYLNVMRRFSQALLKGDKSVRVMRSLLATQQTFVDRLVHLMKAVQRESGNRKKKNERLQALLGDNEKMNLSEFEPIPLPLEPQVKIRGIIPEKATLFKSALMPAKLYFKTEDGGKYPVIFKNGDDLRQDQLILQIISLMDKLLRKENLDLKLTPYKVLATSTKHGFMQFIQSVPVAEVLATEGSIQNFFRKYSPSEKGPYGISAEVMDTYVKSCAGYCVITYILGVGDRHLDNLLLTKTGKLFHIDFGYILGRDPKPLPPPMKLNKEMVEGMGGTQSEQYQAFRKQCYTAFLHLRRYSNLILNLFSLMVDANIPDIALEPDKTVKKVQDKFRLDLSDEEAVHYMQTLIDDSVNALFAAVVEQIHKFAQYWRR.

The C2 PI3K-type domain occupies 35-184; the sequence is YKAVLEDPML…LAKLTKAHRQ (150 aa). In terms of domain architecture, PIK helical spans 283-519; sequence DHDLKPNAAT…PKTHEMYLNV (237 aa). Positions 414 to 464 are disordered; sequence GLEPTKKDSQGPMLESMTTSGINPETDSSQILSNPLPAVSSPAPPSKTKDG. Residues 429-444 are compositionally biased toward polar residues; that stretch reads SMTTSGINPETDSSQI. Residues 445–454 are compositionally biased toward low complexity; it reads LSNPLPAVSS. The region spanning 604 to 870 is the PI3K/PI4K catalytic domain; it reads IPEKATLFKS…LIDDSVNALF (267 aa). The G-loop stretch occupies residues 610–616; that stretch reads LFKSALM. The catalytic loop stretch occupies residues 739–747; that stretch reads GVGDRHLDN. An activation loop region spans residues 758–779; the sequence is HIDFGYILGRDPKPLPPPMKLN.

This sequence belongs to the PI3/PI4-kinase family. Component of the PI3K (PI3KC3/PI3K-III/class III phosphatidylinositol 3-kinase) complex the core of which is composed of the catalytic subunit pik3c3, the regulatory subunit pik3r4 and becn1 associating with additional regulatory/auxiliary subunits to form alternative complex forms. Mn(2+) is required as a cofactor.

The protein resides in the midbody. The enzyme catalyses a 1,2-diacyl-sn-glycero-3-phospho-(1D-myo-inositol) + ATP = a 1,2-diacyl-sn-glycero-3-phospho-(1D-myo-inositol-3-phosphate) + ADP + H(+). Functionally, catalytic subunit of the PI3K complex that mediates formation of phosphatidylinositol 3-phosphate; different complex forms are believed to play a role in multiple membrane trafficking pathways. Involved in the transport of lysosomal enzyme precursors to lysosomes. Required for transport from early to late endosomes. This chain is Phosphatidylinositol 3-kinase catalytic subunit type 3 (pik3c3), found in Xenopus laevis (African clawed frog).